The chain runs to 297 residues: Urease accessory protein UreD (297 aa).

The span at 1–18 (MNSSAASPPAVSPHAAPS) shows a compositional bias: low complexity. Disordered regions lie at residues 1-20 (MNSS…PSRT) and 178-201 (VDQA…PRRR).

This sequence belongs to the UreD family. As to quaternary structure, ureD, UreF and UreG form a complex that acts as a GTP-hydrolysis-dependent molecular chaperone, activating the urease apoprotein by helping to assemble the nickel containing metallocenter of UreC. The UreE protein probably delivers the nickel.

The protein localises to the cytoplasm. Its function is as follows. Required for maturation of urease via the functional incorporation of the urease nickel metallocenter. In Parafrankia sp. (strain EAN1pec), this protein is Urease accessory protein UreD.